We begin with the raw amino-acid sequence, 774 residues long: 5-methyltetrahydropteroyltriglutamate--homocysteine methyltransferase (774 aa).

Residues 23–26 (RELK) and K123 each bind 5-methyltetrahydropteroyltri-L-glutamate. L-homocysteine-binding positions include 446-448 (IGS) and E499. L-methionine-binding positions include 446-448 (IGS) and E499. 5-methyltetrahydropteroyltri-L-glutamate is bound by residues 530-531 (RC) and W576. L-homocysteine is bound at residue D614. D614 is an L-methionine binding site. Position 620 (E620) interacts with 5-methyltetrahydropteroyltri-L-glutamate. Positions 656, 658, and 680 each coordinate Zn(2+). The active-site Proton donor is the H709. Position 741 (C741) interacts with Zn(2+).

This sequence belongs to the vitamin-B12 independent methionine synthase family. Zn(2+) is required as a cofactor.

It catalyses the reaction 5-methyltetrahydropteroyltri-L-glutamate + L-homocysteine = tetrahydropteroyltri-L-glutamate + L-methionine. The protein operates within amino-acid biosynthesis; L-methionine biosynthesis via de novo pathway; L-methionine from L-homocysteine (MetE route): step 1/1. Its function is as follows. Catalyzes the transfer of a methyl group from 5-methyltetrahydrofolate to homocysteine resulting in methionine formation. This is 5-methyltetrahydropteroyltriglutamate--homocysteine methyltransferase from Aliivibrio fischeri (strain MJ11) (Vibrio fischeri).